The sequence spans 179 residues: MTFEDDLQASVRTIPDYPKPGVMFRDITTLLGDARAFRRAVDQLVHPWAGSKIDKVAGIEARGFILGGAVAHQLSAGFVPIRKKGKLPHQTVRMAYALEYGTDEMEMHVDAIAKGERVILVDDLIATGGTAEGAVKLLRQIGADVVAACFIIDLPDLGGAAKLHAMDVPVRTLMAFGGH.

The protein belongs to the purine/pyrimidine phosphoribosyltransferase family. Homodimer.

The protein localises to the cytoplasm. The enzyme catalyses AMP + diphosphate = 5-phospho-alpha-D-ribose 1-diphosphate + adenine. The protein operates within purine metabolism; AMP biosynthesis via salvage pathway; AMP from adenine: step 1/1. In terms of biological role, catalyzes a salvage reaction resulting in the formation of AMP, that is energically less costly than de novo synthesis. The polypeptide is Adenine phosphoribosyltransferase (Nitrobacter hamburgensis (strain DSM 10229 / NCIMB 13809 / X14)).